The primary structure comprises 1186 residues: MSVACVLKRKAVLWQDSFSPHLKHHPQEPANPNMPVVLTSGTGSQAQPQPAANQALAAGTHSSPVPGSIGVAGRSQDDAMVDYFFQRQHGEQLGGGGSGGGGYNNSKHRWPTGDNIHAEHQVRSMDELNHDFQALALEGRAMGEQLLPGKKFWETDESSKDGPKGIFLGDQWRDSAWGTSDHSVSQPIMVQRRPGQSFHVNSEVNSVLSPRSESGGLGVSMVEYVLSSSPGDSCLRKGGFGPRDADSDENDKGEKKNKGTFDGDKLGDLKEEGDVMDKTNGLPVQNGIDADVKDFSRTPGNCQNSANEVDLLGPNQNGSEGLAQLTSTNGAKPVEDFSNMESQSVPLDPMEHVGMEPLQFDYSGTQVPVDSAAATVGLFDYNSQQQLFQRPNALAVQQLTAAQQQQYALAAAHQPHIGLAPAAFVPNPYIISAAPPGTDPYTAGLAAAATLGPAVVPHQYYGVTPWGVYPASLFQQQAAAAAAATNSANQQTTPQAQQGQQQVLRGGASQRPLTPNQNQQGQQTDPLVAAAAVNSALAFGQGLAAGMPGYPVLAPAAYYDQTGALVVNAGARNGLGAPVRLVAPAPVIISSSAAQAAVAAAAASANGAAGGLAGTTNGPFRPLGTQQPQPQPQQQPNNNLASSSFYGNNSLNSNSQSSSLFSQGSAQPANTSLGFGSSSSLGATLGSALGGFGTAVANSNTGSGSRRDSLTGSSDLYKRTSSSLTPIGHSFYNGLSFSSSPGPVGMPLPSQGPGHSQTPPPSLSSHGSSSSLNLGGLTNGGGRYISAAPGAEAKYRSASSASSLFSPSSTLFSSSRLRYGMSDVMPSGRSRLLEDFRNNRYPNLQLREIAGHIMEFSQDQHGSRFIQLKLERATPAERQLVFNEILQAAYQLMVDVFGNYVIQKFFEFGSLEQKLALAERIRGHVLSLALQMYGCRVIQKALEFIPSDQQNEMVRELDGHVLKCVKDQNGNHVVQKCIECVQPQSLQFIIDAFKGQVFALSTHPYGCRVIQRILEHCLPDQTLPILEELHQHTEQLVQDQYGNYVIQHVLEHGRPEDKSKIVAEIRGNVLVLSQHKFASNVVEKCVTHASRTERAVLIDEVCTMNDGPHSALYTMMKDQYANYVVQKMIDVAEPGQRKIVMHKIRPHIATLRKYTYGKHILAKLEKYYMKNGVDLGPICGPPNGII.

S2 is modified (N-acetylserine). S19 carries the post-translational modification Phosphoserine. A disordered region spans residues 22–73 (LKHHPQEPANPNMPVVLTSGTGSQAQPQPAANQALAAGTHSSPVPGSIGVAG). Positions 45-58 (QAQPQPAANQALAA) are enriched in low complexity. S75, S98, and S106 each carry phosphoserine. T112 is modified (phosphothreonine). Residues S124, S159, S197, S209, and S229 each carry the phosphoserine modification. The disordered stretch occupies residues 233 to 272 (SCLRKGGFGPRDADSDENDKGEKKNKGTFDGDKLGDLKEE). Over residues 250–272 (NDKGEKKNKGTFDGDKLGDLKEE) the composition is skewed to basic and acidic residues. Phosphoserine is present on S305. The segment covering 485-502 (TNSANQQTTPQAQQGQQQ) has biased composition (low complexity). Disordered regions lie at residues 485-524 (TNSA…GQQT) and 613-648 (AGTT…FYGN). Polar residues predominate over residues 511–524 (RPLTPNQNQQGQQT). Position 514 is a phosphothreonine (T514). Positions 626-639 (QQPQPQPQQQPNNN) are enriched in low complexity. 2 positions are modified to phosphoserine: S709 and S714. Residues 742 to 775 (GPVGMPLPSQGPGHSQTPPPSLSSHGSSSSLNLG) are disordered. The segment covering 763–775 (LSSHGSSSSLNLG) has biased composition (low complexity). R796 is modified (omega-N-methylarginine). A phosphoserine mark is found at S806 and S822. A PUM-HD domain is found at 828-1168 (GRSRLLEDFR…HILAKLEKYY (341 aa)). Pumilio repeat units follow at residues 848 to 883 (EIAG…LVFN), 884 to 919 (EILQ…ALAE), 920 to 955 (RIRG…EMVR), 956 to 991 (ELDG…FIID), 992 to 1027 (AFKG…PILE), 1028 to 1063 (ELHQ…KIVA), 1064 to 1099 (EIRG…VLID), and 1103 to 1142 (TMND…IVMH). The segment at 863–867 (SRFIQ) is adenine-nucleotide binding in RNA target. The interval 899–903 (NYVIQ) is uracil-nucleotide binding in RNA target. Positions 935-939 (CRVIQ) are adenine-nucleotide binding in RNA target. Residues 971–975 (NHVVQ) are non-specific-nucleotide binding in RNA target. An adenine-nucleotide binding in RNA target region spans residues 1007 to 1011 (CRVIQ). The segment at 1043–1047 (NYVIQ) is uracil-nucleotide binding in RNA target. 2 guanine-nucleotide binding in RNA target regions span residues 1079–1083 (SNVVE) and 1080–1083 (NVVE). Residues 1122-1126 (NYVVQ) form a uracil-nucleotide binding in RNA target region.

Recruits the CCR4-POP2-NOT deadenylase leading to translational inhibition and mRNA degradation. Interacts with TRIM71 (via NHL repeats) in an RNA-dependent manner. In terms of processing, phosphorylation at Ser-714 promotes RNA-binding activity. Following growth factor stimulation phosphorylated at Ser-714, promoting binding to the 3'-UTR of CDKN1B/p27 mRNA.

It localises to the cytoplasm. The protein localises to the P-body. Its subcellular location is the cytoplasmic granule. Functionally, sequence-specific RNA-binding protein that acts as a post-transcriptional repressor by binding the 3'-UTR of mRNA targets. Binds to an RNA consensus sequence, the Pumilio Response Element (PRE), 5'-UGUANAUA-3', that is related to the Nanos Response Element (NRE). Mediates post-transcriptional repression of transcripts via different mechanisms: acts via direct recruitment of the CCR4-POP2-NOT deadenylase leading to translational inhibition and mRNA degradation. Also mediates deadenylation-independent repression by promoting accessibility of miRNAs. Following growth factor stimulation, phosphorylated and binds to the 3'-UTR of CDKN1B/p27 mRNA, inducing a local conformational change that exposes miRNA-binding sites, promoting association of miR-221 and miR-222, efficient suppression of CDKN1B/p27 expression, and rapid entry to the cell cycle. Acts as a post-transcriptional repressor of E2F3 mRNAs by binding to its 3'-UTR and facilitating miRNA regulation. Represses a program of genes necessary to maintain genomic stability such as key mitotic, DNA repair and DNA replication factors. Its ability to repress those target mRNAs is regulated by the lncRNA NORAD (non-coding RNA activated by DNA damage) which, due to its high abundance and multitude of PUMILIO binding sites, is able to sequester a significant fraction of PUM1 and PUM2 in the cytoplasm. Involved in neuronal functions by regulating ATXN1 mRNA levels: acts by binding to the 3'-UTR of ATXN1 transcripts, leading to their down-regulation independently of the miRNA machinery. Plays a role in cytoplasmic sensing of viral infection. In testis, acts as a post-transcriptional regulator of spermatogenesis by binding to the 3'-UTR of mRNAs coding for regulators of p53/TP53. Involved in embryonic stem cell renewal by facilitating the exit from the ground state: acts by targeting mRNAs coding for naive pluripotency transcription factors and accelerates their down-regulation at the onset of differentiation. Binds specifically to miRNA MIR199A precursor, with PUM2, regulates miRNA MIR199A expression at a postranscriptional level. In Pongo abelii (Sumatran orangutan), this protein is Pumilio homolog 1 (PUM1).